The chain runs to 385 residues: Cell division protein FtsZ (385 aa).

GTP is bound by residues 37–41, 125–127, E156, K160, and D204; these read GGGSN and GTG.

This sequence belongs to the FtsZ family. Homodimer. Polymerizes to form a dynamic ring structure in a strictly GTP-dependent manner. Interacts directly with several other division proteins.

It localises to the cytoplasm. Essential cell division protein that forms a contractile ring structure (Z ring) at the future cell division site. The regulation of the ring assembly controls the timing and the location of cell division. One of the functions of the FtsZ ring is to recruit other cell division proteins to the septum to produce a new cell wall between the dividing cells. Binds GTP and shows GTPase activity. This is Cell division protein FtsZ from Helicobacter pylori (strain J99 / ATCC 700824) (Campylobacter pylori J99).